We begin with the raw amino-acid sequence, 225 residues long: Phosphoribosylformylglycinamidine synthase subunit PurQ (225 aa).

The Glutamine amidotransferase type-1 domain maps to 5 to 225 (SAVITFPGSN…ESVVRGLVEA (221 aa)). The Nucleophile role is filled by C89. Residues H197 and E199 contribute to the active site.

In terms of assembly, part of the FGAM synthase complex composed of 1 PurL, 1 PurQ and 2 PurS subunits.

It localises to the cytoplasm. The catalysed reaction is N(2)-formyl-N(1)-(5-phospho-beta-D-ribosyl)glycinamide + L-glutamine + ATP + H2O = 2-formamido-N(1)-(5-O-phospho-beta-D-ribosyl)acetamidine + L-glutamate + ADP + phosphate + H(+). It catalyses the reaction L-glutamine + H2O = L-glutamate + NH4(+). It participates in purine metabolism; IMP biosynthesis via de novo pathway; 5-amino-1-(5-phospho-D-ribosyl)imidazole from N(2)-formyl-N(1)-(5-phospho-D-ribosyl)glycinamide: step 1/2. Functionally, part of the phosphoribosylformylglycinamidine synthase complex involved in the purines biosynthetic pathway. Catalyzes the ATP-dependent conversion of formylglycinamide ribonucleotide (FGAR) and glutamine to yield formylglycinamidine ribonucleotide (FGAM) and glutamate. The FGAM synthase complex is composed of three subunits. PurQ produces an ammonia molecule by converting glutamine to glutamate. PurL transfers the ammonia molecule to FGAR to form FGAM in an ATP-dependent manner. PurS interacts with PurQ and PurL and is thought to assist in the transfer of the ammonia molecule from PurQ to PurL. In Novosphingobium aromaticivorans (strain ATCC 700278 / DSM 12444 / CCUG 56034 / CIP 105152 / NBRC 16084 / F199), this protein is Phosphoribosylformylglycinamidine synthase subunit PurQ.